Here is a 228-residue protein sequence, read N- to C-terminus: MEEKKQQNVTIKGTKDGITLHLDDCCSFSELLMELDEKLSTHYYDGDGRSLIEVHVKVGNRYLTEVQQEEIRTLIRNKKNLVVDSIESDVITKAEAIAWKEETEIVPISKIVRSGQVLHVKGNLLLIGDVNPGGTVIAGGNIFVVGSLRGIAHAGYYGDSDAVIAASVMNPMQLRISDVAMRAPEEKEDGAEAAECAYINENNHIVVDRLQLLTHLRPNLTKLERGIV.

Belongs to the MinC family. In terms of assembly, interacts with MinD and FtsZ.

Cell division inhibitor that blocks the formation of polar Z ring septums. Rapidly oscillates between the poles of the cell to destabilize FtsZ filaments that have formed before they mature into polar Z rings. Prevents FtsZ polymerization. This chain is Probable septum site-determining protein MinC, found in Bacillus cereus (strain B4264).